An 843-amino-acid polypeptide reads, in one-letter code: Leucine--tRNA ligase (843 aa).

The short motif at 61-71 (PYPSGDLHMGH) is the 'HIGH' region element. The 'KMSKS' region signature appears at 606–610 (AMSKS). Residue lysine 609 participates in ATP binding.

Belongs to the class-I aminoacyl-tRNA synthetase family.

It is found in the cytoplasm. It catalyses the reaction tRNA(Leu) + L-leucine + ATP = L-leucyl-tRNA(Leu) + AMP + diphosphate. The protein is Leucine--tRNA ligase of Arthrobacter sp. (strain FB24).